Reading from the N-terminus, the 1440-residue chain is Glucose transporter type 1 (1440 aa).

Residues 1–23 (MAFLCAPGLTFFLTYSIFSAVLG) form the signal peptide. Residues 24–67 (MLQFGYNTGVINAPEKNIENFMKDVYKDRYGEDISEEFIQQLYS) lie on the Cytoplasmic side of the membrane. The chain crosses the membrane as a helical span at residues 68 to 88 (VAVSIFAIGGMLGGFSGGWMA). Residues 89-95 (NRFGRKG) are Extracellular-facing. Residues 96 to 116 (GLLLNNVLGIAGACLMGFTKV) form a helical membrane-spanning segment. The Cytoplasmic portion of the chain corresponds to 117 to 127 (SHSYEMLFLGR). Residues 128–148 (FIIGVNCGLNTSLVPMYISEI) form a helical membrane-spanning segment. Topologically, residues 149–162 (APLNLRGGLGTVNQ) are extracellular. Residue Gln162 coordinates D-glucose. The chain crosses the membrane as a helical span at residues 163-183 (LAVTVGLLLSQVLGIEQILGT). Topologically, residues 184–186 (NEG) are cytoplasmic. Residues 187-207 (WPILLGLAICPAILQLILLPV) form a helical membrane-spanning segment. Over 208–272 (CPESPRYLLI…LICSPTLRPP (65 aa)) the chain is Extracellular. A helical membrane pass occupies residues 273-293 (LIIGIVMQLSQQFSGINAVFY). Residues 283–284 (QQ) and Asn289 contribute to the D-glucose site. At 294-310 (YSTSLFMSSGLTEESAK) the chain is on the cytoplasmic side. The helical transmembrane segment at 311–331 (FATIGIGAIMVVMTLVSIPLM) threads the bilayer. Topologically, residues 332–339 (DRTGRRTL) are extracellular. A helical membrane pass occupies residues 340 to 360 (HLYGLGGMFIFSIFITISFLI). The Cytoplasmic portion of the chain corresponds to 361-372 (KEMIDWMSYLSV). A helical transmembrane segment spans residues 373–393 (VATLGFVVFFAVGPGSIPWMI). Trp391 contributes to the D-glucose binding site. Residues 394–405 (TAELFSQGPRPS) lie on the Extracellular side of the membrane. The chain crosses the membrane as a helical span at residues 406–426 (AMAIAVLVNWMANFVVGIGFP). At 427–429 (SMK) the chain is on the cytoplasmic side. The chain crosses the membrane as a helical span at residues 430 to 450 (TALENYTFLPFSVFLAIFWIF). Over 451-534 (TYKKVPETKN…GPYPLSDSTN (84 aa)) the chain is Extracellular. Residues Asn460 and Asn480 are each glycosylated (N-linked (GlcNAc...) asparagine). The helical transmembrane segment at 535 to 555 (LLGPGSSSYGPGGVLGLAGSG) threads the bilayer. Topologically, residues 556 to 1440 (SGLGGQCYTN…RKYTDFLRKK (885 aa)) are cytoplasmic. Disordered stretches follow at residues 628–708 (ERFL…SRYA), 725–808 (QANP…HSVM), 966–987 (APEGSTLERQSSKGALGSSELP), 1000–1083 (FLAD…GSYH), 1304–1330 (LEGAGGGGASTTSEHSSSLPSPQPLTH), and 1380–1401 (ANSPHSQSHHSHAHTHTHGHHV). The segment covering 669–678 (PPDSASVRST) has biased composition (polar residues). Residues 686–704 (QPQQVHHQQQQVHHQQQHQ) are compositionally biased toward low complexity. A compositionally biased stretch (pro residues) spans 730-739 (QAPPQQPAPP). A compositionally biased stretch (basic residues) spans 754–789 (CQQRKHSHSPHHSRHTSPHSHHHHSHHSRHSRRSRR). The segment covering 1313-1330 (STTSEHSSSLPSPQPLTH) has biased composition (low complexity).

It belongs to the major facilitator superfamily. Sugar transporter (TC 2.A.1.1) family. Glucose transporter subfamily.

Its subcellular location is the membrane. Functionally, facilitative glucose transporter. This chain is Glucose transporter type 1 (Glut1), found in Drosophila melanogaster (Fruit fly).